The following is a 339-amino-acid chain: Phenylalanine--tRNA ligase alpha subunit (339 aa).

Glu254 is a binding site for Mg(2+).

This sequence belongs to the class-II aminoacyl-tRNA synthetase family. Phe-tRNA synthetase alpha subunit type 1 subfamily. In terms of assembly, tetramer of two alpha and two beta subunits. Mg(2+) serves as cofactor.

The protein resides in the cytoplasm. It carries out the reaction tRNA(Phe) + L-phenylalanine + ATP = L-phenylalanyl-tRNA(Phe) + AMP + diphosphate + H(+). This is Phenylalanine--tRNA ligase alpha subunit from Dictyoglomus thermophilum (strain ATCC 35947 / DSM 3960 / H-6-12).